Reading from the N-terminus, the 20-residue chain is Conotoxin PnMLKM-D0211 (20 aa).

The propeptide occupies 1-3; the sequence is VKR. 3 disulfides stabilise this stretch: Cys4/Cys18, Cys5/Cys14, and Cys10/Cys17. Pro16 bears the 4-hydroxyproline mark. Trp19 carries the tryptophan amide modification.

Belongs to the conotoxin M superfamily. In terms of tissue distribution, expressed by the venom duct.

The protein resides in the secreted. This chain is Conotoxin PnMLKM-D0211, found in Conus pennaceus (Feathered cone).